The following is a 334-amino-acid chain: ELMO domain-containing protein 1 (334 aa).

One can recognise an ELMO domain in the interval 133–314 (QHEEMLLKLW…KFRKRIIKQL (182 aa)).

Acts as a GTPase-activating protein (GAP) toward guanine nucleotide exchange factors like ARL2, ARL3, ARF1 and ARF6, but not for GTPases outside the Arf family. The sequence is that of ELMO domain-containing protein 1 (ELMOD1) from Homo sapiens (Human).